The chain runs to 89 residues: Small ribosomal subunit protein bS20 (89 aa).

Residues Met-1–Arg-25 form a disordered region.

This sequence belongs to the bacterial ribosomal protein bS20 family.

Its function is as follows. Binds directly to 16S ribosomal RNA. The sequence is that of Small ribosomal subunit protein bS20 from Paracoccus denitrificans (strain Pd 1222).